Reading from the N-terminus, the 520-residue chain is Cytochrome P450 monooxygenase TRI4 (520 aa).

The chain crosses the membrane as a helical span at residues 10–30; it reads LVNIPISHAVGVVAASTVIYF. N-linked (GlcNAc...) asparagine glycosylation is present at asparagine 447. Cysteine 455 contacts heme.

It belongs to the cytochrome P450 family. The cofactor is heme.

Its subcellular location is the membrane. The protein operates within sesquiterpene biosynthesis; trichothecene biosynthesis. Functionally, cytochrome P450 monooxygenase; part of the core gene cluster that mediates the biosynthesis of trichothecenes, a very large family of chemically related bicyclic sesquiterpene compounds acting as mycotoxins, including T2-toxin. The biosynthesis of trichothecenes begins with the cyclization of farnesyl diphosphate to trichodiene and is catalyzed by the trichodiene synthase TRI5. Trichodiene undergoes a series of oxygenations catalyzed by the cytochrome P450 monooxygenase TRI4. TRI4 controls the addition of four oxygens at C-2, C-3, C-11, and the C-12, C-13-epoxide to form the intermediate isotrichotriol. Isotrichotriol then undergoes a non-enzymatic isomerization and cyclization to form isotrichodermol. During this process, the oxygen at the C-2 position becomes the pyran ring oxygen and the hydroxyl group at C-11 is lost. More complex type A trichothecenes are built by modifying isotrichodermol through a series of paired hydroxylation and acetylation or acylation steps. Isotrichodermol is converted to isotrichodermin by the acetyltransferase TRI101. TRI101 encodes a C-3 transacetylase that acts as a self-protection or resistance factor during biosynthesis and that the presence of a free C-3 hydroxyl group is a key component of Fusarium trichothecene phytotoxicity. A second hydroxyl group is added to C-15 by the trichothecene C-15 hydroxylase TRI11, producing 15-decalonectrin, which is then acetylated by TRI3, producing calonectrin. A third hydroxyl group is added at C-4 by the cytochrome P450 monooxygenase TRI13, converting calonectrin to 3,15-diacetoxyspirpenol, which is subsequently acetylated by the acetyltransferase TRI7. A fourth hydroxyl group is added to C-8 by the cytochrome P450 monooxygenase TRI1, followed by the addition of an isovaleryl moiety by TRI16. Finally, the acetyl group is removed from the C-3 position by the trichothecene C-3 esterase TRI8 to produce T-2 toxin. The protein is Cytochrome P450 monooxygenase TRI4 of Fusarium sporotrichioides.